We begin with the raw amino-acid sequence, 252 residues long: Acyl-coenzyme A diphosphatase FITM2 (252 aa).

The Cytoplasmic portion of the chain corresponds to 1–25 (MAAAVAGSLVDKLVCLWRQPYTRIY). The chain crosses the membrane as a helical span at residues 26–46 (LPHLFFCISLVGSVLKNAELV). Residues 47-59 (PESYFSSSRNVLN) lie on the Lumenal side of the membrane. Residues 60–80 (LYFVKVSWGWTIVLLLPFIAY) traverse the membrane as a helical segment. Over 81 to 94 (SNFYIKSHMFALRR) the chain is Cytoplasmic. A helical transmembrane segment spans residues 95 to 115 (LTSLLVATLVWYICTETFFYI). Residues 116-156 (EDITGSCYESNTMVVIRGEFDTKAACRKAGFFWDGFDISGH) are Lumenal-facing. His-156 is a catalytic residue. A helical transmembrane segment spans residues 157–177 (SFILSYSSLVIMEEMVPMLHI). At 178–190 (QPAYRNPPLDCLY) the chain is on the cytoplasmic side. The helical transmembrane segment at 191-211 (LALNVIVAIWIWMFGCTSVYF) threads the bilayer. The active site involves His-212. Over 212-223 (HDIIDKILGTSC) the chain is Lumenal. Residues 224–244 (GILGWYMTYKVWYVKLFSPGL) form a helical membrane-spanning segment. Over 245–252 (PPQPKQHT) the chain is Cytoplasmic.

It belongs to the FIT family. FIT2 subfamily. As to expression, widely expressed.

The protein localises to the endoplasmic reticulum membrane. The catalysed reaction is an acyl-CoA + H2O = an acyl-4'-phosphopantetheine + adenosine 3',5'-bisphosphate + 2 H(+). In terms of biological role, fatty acyl-coenzyme A (CoA) diphosphatase that hydrolyzes fatty acyl-CoA to yield acyl-4'-phosphopantetheine and adenosine 3',5'-bisphosphate. Preferentially hydrolyzes unsaturated long-chain acyl-CoA substrates in the endoplasmic reticulum (ER) lumen. This catalytic activity is required for maintaining ER structure and for lipid droplets (LDs) biogenesis, which are lipid storage organelles involved in maintaining lipid and energy homeostasis. Required for lipid droplet accumulation in liver and intestine during embryogenesis. May directly bind to diacylglycerol (DAGs) and triacylglycerol, which is also important for LD biogenesis. May support directional budding of nacent LDs from the ER into the cytosol by reducing DAG levels at sites of LD formation. May play a role in the regulation of cell morphology, ER morphology and cytoskeletal organization. The chain is Acyl-coenzyme A diphosphatase FITM2 from Danio rerio (Zebrafish).